A 158-amino-acid chain; its full sequence is Transcription elongation factor GreA (158 aa).

It belongs to the GreA/GreB family.

Functionally, necessary for efficient RNA polymerase transcription elongation past template-encoded arresting sites. The arresting sites in DNA have the property of trapping a certain fraction of elongating RNA polymerases that pass through, resulting in locked ternary complexes. Cleavage of the nascent transcript by cleavage factors such as GreA or GreB allows the resumption of elongation from the new 3'terminus. GreA releases sequences of 2 to 3 nucleotides. The polypeptide is Transcription elongation factor GreA (Ruthia magnifica subsp. Calyptogena magnifica).